The chain runs to 310 residues: Ribosomal RNA large subunit methyltransferase F (310 aa).

It belongs to the methyltransferase superfamily. METTL16/RlmF family.

It is found in the cytoplasm. It carries out the reaction adenosine(1618) in 23S rRNA + S-adenosyl-L-methionine = N(6)-methyladenosine(1618) in 23S rRNA + S-adenosyl-L-homocysteine + H(+). Its function is as follows. Specifically methylates the adenine in position 1618 of 23S rRNA. The sequence is that of Ribosomal RNA large subunit methyltransferase F from Pseudoalteromonas translucida (strain TAC 125).